A 199-amino-acid polypeptide reads, in one-letter code: Holliday junction branch migration complex subunit RuvA (199 aa).

The interval 1–64 (MIALLTGRLA…EDSISLFGFR (64 aa)) is domain I. A domain II region spans residues 65–143 (TLAEKEFFQL…KMDVAPSAQE (79 aa)). Residues 144–154 (APSSEAPAEVA) form a flexible linker region. The tract at residues 154-199 (ADDVASALVNLGYKEAVVRKVLAEMSIEPDASTEAVLRQALKVLMK) is domain III.

It belongs to the RuvA family. As to quaternary structure, homotetramer. Forms an RuvA(8)-RuvB(12)-Holliday junction (HJ) complex. HJ DNA is sandwiched between 2 RuvA tetramers; dsDNA enters through RuvA and exits via RuvB. An RuvB hexamer assembles on each DNA strand where it exits the tetramer. Each RuvB hexamer is contacted by two RuvA subunits (via domain III) on 2 adjacent RuvB subunits; this complex drives branch migration. In the full resolvosome a probable DNA-RuvA(4)-RuvB(12)-RuvC(2) complex forms which resolves the HJ.

The protein localises to the cytoplasm. Its function is as follows. The RuvA-RuvB-RuvC complex processes Holliday junction (HJ) DNA during genetic recombination and DNA repair, while the RuvA-RuvB complex plays an important role in the rescue of blocked DNA replication forks via replication fork reversal (RFR). RuvA specifically binds to HJ cruciform DNA, conferring on it an open structure. The RuvB hexamer acts as an ATP-dependent pump, pulling dsDNA into and through the RuvAB complex. HJ branch migration allows RuvC to scan DNA until it finds its consensus sequence, where it cleaves and resolves the cruciform DNA. The protein is Holliday junction branch migration complex subunit RuvA of Geobacter sulfurreducens (strain ATCC 51573 / DSM 12127 / PCA).